The sequence spans 206 residues: MMQRNSNNTSITSNISNNSSSHQACASCKHQRKKCNNECILSPYFPARKTKEFQAVHKVFGVSNVQKMVRTVREEDRTKLSDSLTWEALWRQKDPVLGSYGEYRRICEELKLYKSLVHNQPLIGWDNNQRVFNNNSNNKNGLAMTNSSGSGGFSVNNNGVGVNREIVNGGYASRNVQGGWENLKHDQRQQCYAVINNGFKQHYLPL.

The tract at residues 1 to 20 is disordered; it reads MMQRNSNNTSITSNISNNSS. The region spanning 23 to 123 is the LOB domain; that stretch reads QACASCKHQR…KSLVHNQPLI (101 aa).

It belongs to the LOB domain-containing protein family.

The polypeptide is LOB domain-containing protein 2 (LBD2) (Arabidopsis thaliana (Mouse-ear cress)).